Here is a 135-residue protein sequence, read N- to C-terminus: UPF0299 membrane protein YPK_2559 (135 aa).

The next 3 membrane-spanning stretches (helical) occupy residues 30-50 (LLLPIVIPGSIIGMLILFVLL), 66-86 (LLIRYMALLFVPIGVGVMQYY), and 93-113 (FGPIVVSCFISTLIVMLVVAY).

Belongs to the UPF0299 family.

Its subcellular location is the cell inner membrane. In Yersinia pseudotuberculosis serotype O:3 (strain YPIII), this protein is UPF0299 membrane protein YPK_2559.